A 136-amino-acid chain; its full sequence is Histone H3.3 (136 aa).

Residues 1–42 (MARTKQTARKSTGGKAPRKQLASKAARKSAPVSGGVKKPHRY) form a disordered region. The residue at position 5 (K5) is an N6,N6,N6-trimethyllysine; alternate. K5 carries the post-translational modification N6,N6-dimethyllysine; alternate. 2 positions are modified to N6-methyllysine; alternate: K5 and K10. K10 carries the N6-acetyllysine; alternate modification. A Phosphoserine modification is found at S11. Residue K15 is modified to N6,N6-dimethyllysine; alternate. N6-acetyllysine; alternate occurs at positions 15, 19, 24, 28, and 37. An N6-methyllysine; alternate mark is found at K19, K24, K28, and K37. K28 and K37 each carry N6,N6,N6-trimethyllysine; alternate. 2 positions are modified to N6,N6-dimethyllysine; alternate: K28 and K37. 2 positions are modified to N6-acetyllysine: K57 and K65. K80 is subject to N6,N6,N6-trimethyllysine; alternate. An N6,N6-dimethyllysine; alternate modification is found at K80. K80 bears the N6-methyllysine; alternate mark.

It belongs to the histone H3 family. As to quaternary structure, the nucleosome is a histone octamer containing two molecules each of H2A, H2B, H3 and H4 assembled in one H3-H4 heterotetramer and two H2A-H2B heterodimers. The octamer wraps approximately 147 bp of DNA. Post-translationally, phosphorylated by IPL1 to form H3S10ph. H3S10ph promotes subsequent H3K14ac formation by GCN5 and is required for transcriptional activation through TBP recruitment to the promoters. In terms of processing, mono-, di- and trimethylated by the COMPASS complex to form H3K4me1/2/3. H3K4me activates gene expression by regulating transcription elongation and plays a role in telomere length maintenance. H3K4me enrichment correlates with transcription levels, and occurs in a 5' to 3' gradient with H3K4me3 enrichment at the 5'-end of genes, shifting to H3K4me2 and then H3K4me1. Methylated by SET2 to form H3K36me. H3K36me represses gene expression. Methylated by DOT1 to form H3K79me. H3K79me is required for association of SIR proteins with telomeric regions and for telomeric silencing. The COMPASS-mediated formation of H3K4me2/3 and the DOT1-mediated formation of H3K79me require H2BK123ub1. Acetylation of histone H3 leads to transcriptional activation. H3K14ac formation by GCN5 is promoted by H3S10ph. H3K14ac can also be formed by ESA1. H3K56ac formation occurs predominantly in newly synthesized H3 molecules during G1, S and G2/M of the cell cycle and may be involved in DNA repair.

It localises to the nucleus. The protein resides in the chromosome. Its function is as follows. Core component of nucleosome. Nucleosomes wrap and compact DNA into chromatin, limiting DNA accessibility to the cellular machineries which require DNA as a template. Histones thereby play a central role in transcription regulation, DNA repair, DNA replication and chromosomal stability. DNA accessibility is regulated via a complex set of post-translational modifications of histones, also called histone code, and nucleosome remodeling. The chain is Histone H3.3 (HHT3) from Debaryomyces hansenii (strain ATCC 36239 / CBS 767 / BCRC 21394 / JCM 1990 / NBRC 0083 / IGC 2968) (Yeast).